Reading from the N-terminus, the 432-residue chain is PC-esterase domain-containing protein 1B (432 aa).

2 disordered regions span residues 273-312 (WESS…SPGL) and 407-432 (GPYM…SRPQ). The segment covering 285 to 294 (QDNIGPQFAQ) has biased composition (polar residues). Residues 296–312 (PPYPFPRPPPLLPSPGL) are compositionally biased toward pro residues.

Belongs to the PC-esterase family.

In Rattus norvegicus (Rat), this protein is PC-esterase domain-containing protein 1B (Pced1b).